Consider the following 302-residue polypeptide: Coenzyme PQQ synthesis protein B (302 aa).

This sequence belongs to the PqqB family.

The protein operates within cofactor biosynthesis; pyrroloquinoline quinone biosynthesis. Functionally, may be involved in the transport of PQQ or its precursor to the periplasm. The chain is Coenzyme PQQ synthesis protein B from Azotobacter vinelandii (strain DJ / ATCC BAA-1303).